A 743-amino-acid chain; its full sequence is Catalase-peroxidase (743 aa).

Polar residues predominate over residues 1-15 (MSSDSRPPQPDTSTQ). The disordered stretch occupies residues 1-40 (MSSDSRPPQPDTSTQSNSESESPAISSPTPQDHAPMTNRD). Residues 16–28 (SNSESESPAISSP) are compositionally biased toward low complexity. Positions 110 to 233 (WHAAGTYRIQ…YGATTMGLIY (124 aa)) form a cross-link, tryptophyl-tyrosyl-methioninium (Trp-Tyr) (with M-259). Residue His-111 is the Proton acceptor of the active site. Residues 233 to 259 (YVNPEGPEGKPDPVAAAHDIRETFARM) constitute a cross-link (tryptophyl-tyrosyl-methioninium (Tyr-Met) (with W-110)). His-274 is a heme b binding site. The interval 490–511 (DKRGGANGGRLRLEPQKSWESN) is disordered.

It belongs to the peroxidase family. Peroxidase/catalase subfamily. In terms of assembly, homodimer or homotetramer. Heme b serves as cofactor. Post-translationally, formation of the three residue Trp-Tyr-Met cross-link is important for the catalase, but not the peroxidase activity of the enzyme.

The catalysed reaction is H2O2 + AH2 = A + 2 H2O. It catalyses the reaction 2 H2O2 = O2 + 2 H2O. Bifunctional enzyme with both catalase and broad-spectrum peroxidase activity. This Mycobacterium ulcerans (strain Agy99) protein is Catalase-peroxidase.